The chain runs to 300 residues: MILEGGGVMNLNPGNNLLHQPPTWTDSYSTCNVSSGFFGGQWHEIHPQYWTKYQVWEWLQHLLDTNQLDASCIPFQEFDINGEHLCSMSLQEFTRAAGTAGQLLYSNLQHLKWNGQCSSDLFQSTHNVIVKTEQTEPSIVNTWKDENYLYDTNYGSTVDLLDSKTFCRAQISMTTTSHLPVAESPDMKKEQDPPAKCHTKKHNPRGTHLWEFIRDILLNPDKNPGLIKWEDRSEGVFRFLKSEAVAQLWGKKKNNSSMTYEKLSRAMRYYYKREILERVDGRRLVYKFGKNARGWRENEN.

The PNT domain occupies 29–115 (STCNVSSGFF…SNLQHLKWNG (87 aa)). Residues 183–202 (ESPDMKKEQDPPAKCHTKKH) form a disordered region. A compositionally biased stretch (basic and acidic residues) spans 185–195 (PDMKKEQDPPA). Residues 207 to 289 (THLWEFIRDI…DGRRLVYKFG (83 aa)) constitute a DNA-binding region (ETS).

Belongs to the ETS family.

Its subcellular location is the nucleus. In terms of biological role, transcriptional activator that may play a role in regulating epithelial cell differentiation and proliferation. May act as a repressor for a specific subset of ETS/AP-1-responsive genes, and as a modulator of the nuclear response to mitogen-activated protein kinase signaling cascades. Binds to DNA sequences containing the consensus nucleotide core sequence GGAA. Involved in regulation of TNFRSF10B/DR5 expression through Ets-binding sequences on the TNFRSF10B/DR5 promoter. This chain is ETS homologous factor (EHF), found in Pan paniscus (Pygmy chimpanzee).